The following is a 513-amino-acid chain: Cytochrome P450 1A2 (513 aa).

O-linked (GlcNAc) serine glycosylation is present at serine 68. Phenylalanine 225 contacts substrate. Cysteine 456 is a heme binding site.

The protein belongs to the cytochrome P450 family. Interacts with PGRMC1; the interaction requires PGRMC1 homodimerization. The cofactor is heme. As to expression, found in lung and liver.

Its subcellular location is the endoplasmic reticulum membrane. The protein localises to the microsome membrane. It catalyses the reaction an organic molecule + reduced [NADPH--hemoprotein reductase] + O2 = an alcohol + oxidized [NADPH--hemoprotein reductase] + H2O + H(+). It carries out the reaction 17beta-estradiol + reduced [NADPH--hemoprotein reductase] + O2 = 2-hydroxy-17beta-estradiol + oxidized [NADPH--hemoprotein reductase] + H2O + H(+). The enzyme catalyses 17beta-estradiol + reduced [NADPH--hemoprotein reductase] + O2 = 4-hydroxy-17beta-estradiol + oxidized [NADPH--hemoprotein reductase] + H2O + H(+). The catalysed reaction is estrone + reduced [NADPH--hemoprotein reductase] + O2 = 2-hydroxyestrone + oxidized [NADPH--hemoprotein reductase] + H2O + H(+). It catalyses the reaction estrone + reduced [NADPH--hemoprotein reductase] + O2 = 4-hydroxyestrone + oxidized [NADPH--hemoprotein reductase] + H2O + H(+). It carries out the reaction cholesterol + reduced [NADPH--hemoprotein reductase] + O2 = 25-hydroxycholesterol + oxidized [NADPH--hemoprotein reductase] + H2O + H(+). The enzyme catalyses all-trans-retinol + reduced [NADPH--hemoprotein reductase] + O2 = all-trans-retinal + oxidized [NADPH--hemoprotein reductase] + 2 H2O + H(+). The catalysed reaction is all-trans-retinal + reduced [NADPH--hemoprotein reductase] + O2 = all-trans-retinoate + oxidized [NADPH--hemoprotein reductase] + H2O + 2 H(+). It catalyses the reaction (5Z,8Z,11Z,14Z)-eicosatetraenoate + reduced [NADPH--hemoprotein reductase] + O2 = (14R,15S)-epoxy-(5Z,8Z,11Z)-eicosatrienoate + oxidized [NADPH--hemoprotein reductase] + H2O + H(+). It carries out the reaction (5Z,8Z,11Z,14Z)-eicosatetraenoate + reduced [NADPH--hemoprotein reductase] + O2 = (14S,15R)-epoxy-(5Z,8Z,11Z)-eicosatrienoate + oxidized [NADPH--hemoprotein reductase] + H2O + H(+). The enzyme catalyses (5Z,8Z,11Z,14Z,17Z)-eicosapentaenoate + reduced [NADPH--hemoprotein reductase] + O2 = (17R,18S)-epoxy-(5Z,8Z,11Z,14Z)-eicosatetraenoate + oxidized [NADPH--hemoprotein reductase] + H2O + H(+). The catalysed reaction is (4Z,7Z,10Z,13Z,16Z,19Z)-docosahexaenoate + reduced [NADPH--hemoprotein reductase] + O2 = (19R,20S)-epoxy-(4Z,7Z,10Z,13Z,16Z)-docosapentaenoate + oxidized [NADPH--hemoprotein reductase] + H2O + H(+). It catalyses the reaction (5S)-hydroperoxy-(6E,8Z,11Z,14Z)-eicosatetraenoate = 5-oxo-(6E,8Z,11Z,14Z)-eicosatetraenoate + H2O. It carries out the reaction (12S)-hydroperoxy-(5Z,8Z,10E,14Z)-eicosatetraenoate = 12-oxo-(5Z,8Z,10E,14Z)-eicosatetraenoate + H2O. The enzyme catalyses (15S)-hydroperoxy-(5Z,8Z,11Z,13E)-eicosatetraenoate = 15-oxo-(5Z,8Z,11Z,13E)-eicosatetraenoate + H2O. The catalysed reaction is (13S)-hydroperoxy-(9Z,11E)-octadecadienoate = 13-oxo-(9Z,11E)-octadecadienoate + H2O. It catalyses the reaction (5Z,8Z,11Z,14Z)-eicosatetraenoate + reduced [NADPH--hemoprotein reductase] + O2 = 13-hydroxy-(5Z,8Z,11Z,14Z)-eicosatetraenoate + oxidized [NADPH--hemoprotein reductase] + H2O + H(+). It carries out the reaction (5Z,8Z,11Z,14Z)-eicosatetraenoate + reduced [NADPH--hemoprotein reductase] + O2 = 19-hydroxy-(5Z,8Z,11Z,14Z)-eicosatetraenoate + oxidized [NADPH--hemoprotein reductase] + H2O + H(+). The enzyme catalyses (9Z,12Z)-octadecadienoate + reduced [NADPH--hemoprotein reductase] + O2 = 11-hydroxy-(9Z,12Z)-octadecadienoate + oxidized [NADPH--hemoprotein reductase] + H2O + H(+). It functions in the pathway cofactor metabolism; retinol metabolism. Its pathway is steroid metabolism; cholesterol metabolism. The protein operates within lipid metabolism; arachidonate metabolism. In terms of biological role, a cytochrome P450 monooxygenase involved in the metabolism of various endogenous substrates, including fatty acids, steroid hormones and vitamins. Mechanistically, uses molecular oxygen inserting one oxygen atom into a substrate, and reducing the second into a water molecule, with two electrons provided by NADPH via cytochrome P450 reductase (NADPH--hemoprotein reductase). Catalyzes the hydroxylation of carbon-hydrogen bonds. Exhibits high catalytic activity for the formation of hydroxyestrogens from estrone (E1) and 17beta-estradiol (E2), namely 2-hydroxy E1 and E2. Metabolizes cholesterol toward 25-hydroxycholesterol, a physiological regulator of cellular cholesterol homeostasis. May act as a major enzyme for all-trans retinoic acid biosynthesis in the liver. Catalyzes two successive oxidative transformation of all-trans retinol to all-trans retinal and then to the active form all-trans retinoic acid. Primarily catalyzes stereoselective epoxidation of the last double bond of polyunsaturated fatty acids (PUFA), displaying a strong preference for the (R,S) stereoisomer. Catalyzes bisallylic hydroxylation and omega-1 hydroxylation of PUFA. May also participate in eicosanoids metabolism by converting hydroperoxide species into oxo metabolites (lipoxygenase-like reaction, NADPH-independent). Plays a role in the oxidative metabolism of xenobiotics. Catalyzes the N-hydroxylation of heterocyclic amines and the O-deethylation of phenacetin. Metabolizes caffeine via N3-demethylation. This is Cytochrome P450 1A2 (CYP1A2) from Mesocricetus auratus (Golden hamster).